Reading from the N-terminus, the 243-residue chain is tRNA1(Val) (adenine(37)-N6)-methyltransferase (243 aa).

It belongs to the methyltransferase superfamily. tRNA (adenine-N(6)-)-methyltransferase family.

It is found in the cytoplasm. The catalysed reaction is adenosine(37) in tRNA1(Val) + S-adenosyl-L-methionine = N(6)-methyladenosine(37) in tRNA1(Val) + S-adenosyl-L-homocysteine + H(+). Functionally, specifically methylates the adenine in position 37 of tRNA(1)(Val) (anticodon cmo5UAC). This chain is tRNA1(Val) (adenine(37)-N6)-methyltransferase, found in Shewanella loihica (strain ATCC BAA-1088 / PV-4).